An 897-amino-acid chain; its full sequence is Major intrinsically disordered Notch2-binding receptor 1 (897 aa).

Over 1–872 (MDAMPEYSLF…AEFRRAKACK (872 aa)) the chain is Cytoplasmic. 3 disordered regions span residues 405–433 (AKDKPTASPSGFSKKSNGSKTKDMSSVAC), 450–502 (SINC…EDSE), and 688–766 (TRRS…PPKD). Polar residues-rich tracts occupy residues 411 to 423 (ASPSGFSKKSNGS) and 452 to 471 (NCPSFQSSNVDNGMSVGTQT). Residues 472–498 (EQHESRKVKDYPSQNKFKERPPFKHSE) are compositionally biased toward basic and acidic residues. The segment covering 697–724 (EENSATESKVASITNSPRDWRTVSYSSH) has biased composition (polar residues). Residues 725 to 756 (NGEEGKERDRHSEGKERHRKSREAERQYEAHQ) are compositionally biased toward basic and acidic residues. Residues 873 to 893 (IGALIFAAACTVILVIVVPIC) traverse the membrane as a helical segment. Residues 894–897 (TMKS) are Extracellular-facing.

The protein belongs to the MINAR family.

It localises to the cell membrane. Intrinsically disordered protein which may negatively regulate mTOR signaling pathway by stabilizing the mTOR complex component DEPTOR. Negatively regulates angiogenesis. Negatively regulates cell growth. May play a role in neuronal development. The sequence is that of Major intrinsically disordered Notch2-binding receptor 1 (minar1) from Danio rerio (Zebrafish).